The chain runs to 180 residues: FMN reductase (NADH) RutF (180 aa).

Belongs to the non-flavoprotein flavin reductase family. RutF subfamily.

The catalysed reaction is FMNH2 + NAD(+) = FMN + NADH + 2 H(+). In terms of biological role, catalyzes the reduction of FMN to FMNH2 which is used to reduce pyrimidine by RutA via the Rut pathway. The chain is FMN reductase (NADH) RutF from Bradyrhizobium diazoefficiens (strain JCM 10833 / BCRC 13528 / IAM 13628 / NBRC 14792 / USDA 110).